The sequence spans 493 residues: Insulinoma-associated protein 2 (493 aa).

Positions 1–12 (MPRGFLVKRTKR) are enriched in basic residues. Residues 1–20 (MPRGFLVKRTKRSGSSYRAR) form an SNAG domain region. Residues 1–77 (MPRGFLVKRT…PGPSPARPAG (77 aa)) are disordered. Residues 203–223 (FICQLCKHQYADPFALAQHRC) form a C2H2-type 1; atypical zinc finger. Residues 231–253 (YRCPECDKVFSCPANLASHRRWH) form a C2H2-type 2 zinc finger. The tract at residues 248–310 (SHRRWHKPRP…SGDGQHRDSA (63 aa)) is disordered. A compositionally biased stretch (pro residues) spans 267–276 (PHAPLTPPDP). Positions 283–294 (ENGRVPRTDDQH) are enriched in basic and acidic residues. C2H2-type zinc fingers lie at residues 354-376 (FVCPYCHKKFRRQAYLRKHLGTH), 398-420 (FACPLCGAHFPSADIREKHRLWH), and 452-475 (FSCKYCPSTFFSSPGLTRHINKCH).

In terms of tissue distribution, expressed in spleen, stomach, liver, kidney and testis. In the pancreas, expressed in islet cells, including insulin-producing beta-cells, but not in acinar cells (at protein level). In the brain, expressed in the neuronal cells of the cerebral cortex, the Purkinje cells of the cerebellum and the hippocampal region including CA1 and CA3 (at protein level).

It localises to the cytoplasm. It is found in the nucleus. May function as a growth suppressor or tumor suppressor in liver cells and in certain neurons. This is Insulinoma-associated protein 2 (Insm2) from Mus musculus (Mouse).